Reading from the N-terminus, the 302-residue chain is Succinate--CoA ligase [ADP-forming] subunit alpha (302 aa).

CoA is bound by residues 17 to 20 (TGST), Lys-43, and 96 to 98 (ITE). Residue Tyr-159 coordinates substrate. Catalysis depends on His-247, which acts as the Tele-phosphohistidine intermediate.

This sequence belongs to the succinate/malate CoA ligase alpha subunit family. In terms of assembly, heterotetramer of two alpha and two beta subunits.

The enzyme catalyses succinate + ATP + CoA = succinyl-CoA + ADP + phosphate. The catalysed reaction is GTP + succinate + CoA = succinyl-CoA + GDP + phosphate. The protein operates within carbohydrate metabolism; tricarboxylic acid cycle; succinate from succinyl-CoA (ligase route): step 1/1. Succinyl-CoA synthetase functions in the citric acid cycle (TCA), coupling the hydrolysis of succinyl-CoA to the synthesis of either ATP or GTP and thus represents the only step of substrate-level phosphorylation in the TCA. The alpha subunit of the enzyme binds the substrates coenzyme A and phosphate, while succinate binding and nucleotide specificity is provided by the beta subunit. The protein is Succinate--CoA ligase [ADP-forming] subunit alpha of Staphylococcus aureus (strain MRSA252).